A 193-amino-acid polypeptide reads, in one-letter code: Acyl carrier protein phosphodiesterase (193 aa).

It belongs to the AcpH family.

It catalyses the reaction holo-[ACP] + H2O = apo-[ACP] + (R)-4'-phosphopantetheine + H(+). In terms of biological role, converts holo-ACP to apo-ACP by hydrolytic cleavage of the phosphopantetheine prosthetic group from ACP. The protein is Acyl carrier protein phosphodiesterase of Enterobacter sp. (strain 638).